Reading from the N-terminus, the 57-residue chain is uncharacterized protein (57 aa).

A helical transmembrane segment spans residues 34–54 (AALLDAAALVVIPGLLTVAAV).

The protein localises to the membrane. This is an uncharacterized protein from Dictyostelium discoideum (Social amoeba).